The sequence spans 200 residues: Serine/arginine-rich splicing factor RSZ23 (200 aa).

One can recognise an RRM domain in the interval 2-71 (ARVYVGNLDP…NGWRVELSTK (70 aa)). Residues 86 to 103 (MKCYECGEPGHFARECRL) form a CCHC-type zinc finger. Residues 105–200 (IGSGGLGSGR…REESPYANNA (96 aa)) are disordered. Basic residues predominate over residues 113–139 (GRRRSRSRSRSPRYRGRSRSRSPRYRR).

Belongs to the splicing factor SR family. Extensively phosphorylated on serine residues in the RS domain. As to expression, expressed in roots, leaves and immature seeds.

Its subcellular location is the nucleus. Its function is as follows. Involved in pre-mRNA splicing. In protoplast assay, enhances splicing efficiency of WAXY intron 1 and alters the selection of the 5'-splice sites by stimulating site 1 (proximal site). This chain is Serine/arginine-rich splicing factor RSZ23 (RSZ23), found in Oryza sativa subsp. japonica (Rice).